Consider the following 218-residue polypeptide: MQPDRDTLLAGAQALGCPLSDTQADALLAYLGLLQRWNQVYNLTAIRDPKQMLVQHLLDSLAVIAPLNRVAGSAPLRLLDVGSGGGLPGVVIAVLRPDCQITCVDTVAKKATFIRQVTAELRLPQLVARHARVEQLTDGPYSVITARAFASLADLVKLTRPLLAPGGCWMAMKGQHPQAEIDALDADINVFHVEQLSVPGLDAERRLVWMRPRSVASS.

Residues G82, L87, 133-134, and R147 contribute to the S-adenosyl-L-methionine site; that span reads VE.

This sequence belongs to the methyltransferase superfamily. RNA methyltransferase RsmG family.

The protein resides in the cytoplasm. The enzyme catalyses guanosine(527) in 16S rRNA + S-adenosyl-L-methionine = N(7)-methylguanosine(527) in 16S rRNA + S-adenosyl-L-homocysteine. Specifically methylates the N7 position of guanine in position 527 of 16S rRNA. This Leptothrix cholodnii (strain ATCC 51168 / LMG 8142 / SP-6) (Leptothrix discophora (strain SP-6)) protein is Ribosomal RNA small subunit methyltransferase G.